The chain runs to 802 residues: Phenylalanine--tRNA ligase beta subunit (802 aa).

The tRNA-binding domain maps to 40 to 155; that stretch reads SASLKNVVVG…AHVETGVNAI (116 aa). The B5 domain maps to 409–484; it reads KAVNKIETSL…RIYGYDEIPV (76 aa). Residues Asp-462, Asp-468, Glu-471, and Glu-472 each contribute to the Mg(2+) site. The FDX-ACB domain occupies 709–802; that stretch reads PRYPEMTRDL…LQEKLNAIIR (94 aa).

It belongs to the phenylalanyl-tRNA synthetase beta subunit family. Type 1 subfamily. Tetramer of two alpha and two beta subunits. Mg(2+) is required as a cofactor.

It localises to the cytoplasm. The enzyme catalyses tRNA(Phe) + L-phenylalanine + ATP = L-phenylalanyl-tRNA(Phe) + AMP + diphosphate + H(+). The polypeptide is Phenylalanine--tRNA ligase beta subunit (Listeria monocytogenes serovar 1/2a (strain ATCC BAA-679 / EGD-e)).